The following is a 252-amino-acid chain: MERVLIVNADDFGLSKGQNYGIVEAYRNGVVTSTTALVNGEAIDHAAQLSRELPALGVGMHFVLTLGKPVSEMPGLTRDGLLGKWIWQMAEEDTLPLDEIAHELACQYQRFIDVFGREPTHLDSHHHVHMFPQIFPIVARFAAQRGIALRIDRQTVLNADDLPSDLRSTQGFSSEFYGEEITEACFLRILDASAHRGEASLEVMCHPAFVDNIIRQSAYCYPRLTELEVLTSASLKAGIAERVYRPGSFLDI.

Positions 61 and 125 each coordinate Mg(2+).

This sequence belongs to the YdjC deacetylase family. ChbG subfamily. In terms of assembly, homodimer. Requires Mg(2+) as cofactor.

Its subcellular location is the cytoplasm. It catalyses the reaction N,N'-diacetylchitobiose + H2O = N-acetyl-beta-D-glucosaminyl-(1-&gt;4)-D-glucosamine + acetate. The catalysed reaction is diacetylchitobiose-6'-phosphate + H2O = N'-monoacetylchitobiose-6'-phosphate + acetate. It participates in glycan degradation; chitin degradation. Involved in the degradation of chitin. ChbG is essential for growth on the acetylated chitooligosaccharides chitobiose and chitotriose but is dispensable for growth on cellobiose and chitosan dimer, the deacetylated form of chitobiose. Deacetylation of chitobiose-6-P and chitotriose-6-P is necessary for both the activation of the chb promoter by the regulatory protein ChbR and the hydrolysis of phosphorylated beta-glucosides by the phospho-beta-glucosidase ChbF. Catalyzes the removal of only one acetyl group from chitobiose-6-P to yield monoacetylchitobiose-6-P, the inducer of ChbR and the substrate of ChbF. The polypeptide is Chitooligosaccharide deacetylase (Salmonella typhi).